Here is an 862-residue protein sequence, read N- to C-terminus: Phosphatidic acid phosphohydrolase 1 (862 aa).

Positions 19–104 are N-LIP; sequence NPATLSGAID…VPDELLVSPV (86 aa). Disordered stretches follow at residues 104–183 and 300–341; these read VMSA…SVEE and GSTL…AGSG. Residues 105 to 117 show a composition bias toward polar residues; the sequence is MSATSSPPQSPET. Phosphoserine is present on residues Ser-110 and Ser-114. Over residues 132 to 143 the composition is skewed to basic and acidic residues; that stretch reads NENKKKEKKVLE. Low complexity-rich tracts occupy residues 161 to 179 and 300 to 313; these read SETT…TPPD and GSTL…PSGS. Ser-168 carries the phosphoserine modification. The DXDXT motif motif lies at 398-402; the sequence is DIDGT. Position 496 is an N6-acetyllysine (Lys-496). Ser-511 carries the phosphoserine modification. Ser-602 is subject to Phosphoserine; by CDC28. Positions 648 to 732 are disordered; that stretch reads SDISNDDSDN…TPNKSTMSKG (85 aa). Residues 651-663 show a composition bias toward acidic residues; that stretch reads SNDDSDNIDEDTD. Polar residues-rich tracts occupy residues 664–679 and 687–699; these read VSQQ…NSVK and PQRN…NNNE. Low complexity predominate over residues 710–730; the sequence is ASDLVSSHSSSGSTPNKSTMS. Thr-723 is subject to Phosphothreonine; by CDC28. Position 744 is a phosphoserine; by CDC28 (Ser-744). Phosphoserine is present on residues Ser-748, Ser-773, and Ser-774. The tract at residues 757–780 is disordered; it reads MDDEDSNYNRTKSRRASSAAATSI. Lys-801 is subject to N6-acetyllysine. A disordered region spans residues 807–862; that stretch reads DVHSLGNSDTESRREQSVNETGRNQLPHNSMDDKDLDSRVSDEFDDDEFDEDEFED. Residues Ser-810 and Ser-814 each carry the phosphoserine modification. Thr-816 bears the Phosphothreonine mark. Positions 824–834 are enriched in polar residues; sequence VNETGRNQLPH. Residues 836-848 show a composition bias toward basic and acidic residues; sequence SMDDKDLDSRVSD. A phosphoserine mark is found at Ser-844 and Ser-847. A compositionally biased stretch (acidic residues) spans 849-862; that stretch reads EFDDDEFDEDEFED.

Belongs to the lipin family. The cofactor is Mg(2+). Acetylation at Lys-496 and Lys-801 by ESA1 promotes synthesis of diacylglycerol. In terms of processing, phosphorylated by CDC28 at the onset of mitosis, and dephosphorylated by the NEM1-SPO7 complex. Phosphorylation regulates recruitment on promoters of lipid biosynthetic enzymes.

The protein localises to the cytoplasm. It is found in the nucleus membrane. The protein resides in the endoplasmic reticulum membrane. The enzyme catalyses a 1,2-diacyl-sn-glycero-3-phosphate + H2O = a 1,2-diacyl-sn-glycerol + phosphate. Its activity is regulated as follows. Phenylglyoxal and propranolol inhibit activity in dose-dependent manners with IC(50) values of 1.3 mM and 0.2 mM, respectively. Sertraline inhibits activity in a dose-dependent manner with an IC(50) value of 85 uM; the inhibitory effects of sertraline and propranolol are additive. Functionally, mg(2+)-dependent phosphatidate (PA) phosphatase which catalyzes the dephosphorylation of PA to yield diacylglycerol. Required for de novo lipid synthesis and formation of lipid droplets. Controls transcription of phospholipid biosynthetic genes and nuclear structure by regulating the amount of membrane present at the nuclear envelope. Involved in plasmid maintenance, in respiration and in cell proliferation. In Saccharomyces cerevisiae (strain ATCC 204508 / S288c) (Baker's yeast), this protein is Phosphatidic acid phosphohydrolase 1 (PAH1).